A 282-amino-acid chain; its full sequence is Nucleotide-binding protein PXO_02223 (282 aa).

5-12 (GLSGSGKS) provides a ligand contact to ATP. 57–60 (DVRS) provides a ligand contact to GTP.

This sequence belongs to the RapZ-like family.

In terms of biological role, displays ATPase and GTPase activities. The protein is Nucleotide-binding protein PXO_02223 of Xanthomonas oryzae pv. oryzae (strain PXO99A).